Reading from the N-terminus, the 308-residue chain is tRNA dimethylallyltransferase (308 aa).

An ATP-binding site is contributed by 14–21; the sequence is GPTASGKT. 16 to 21 serves as a coordination point for substrate; sequence TASGKT. 3 interaction with substrate tRNA regions span residues 39–42, 163–167, and 244–249; these read DSAL, QRLSR, and RCVGYR.

It belongs to the IPP transferase family. In terms of assembly, monomer. The cofactor is Mg(2+).

The catalysed reaction is adenosine(37) in tRNA + dimethylallyl diphosphate = N(6)-dimethylallyladenosine(37) in tRNA + diphosphate. Its function is as follows. Catalyzes the transfer of a dimethylallyl group onto the adenine at position 37 in tRNAs that read codons beginning with uridine, leading to the formation of N6-(dimethylallyl)adenosine (i(6)A). This chain is tRNA dimethylallyltransferase, found in Shewanella baltica (strain OS223).